The following is a 376-amino-acid chain: Succinyl-diaminopimelate desuccinylase 1 (376 aa).

His-67 contributes to the Zn(2+) binding site. Asp-69 is an active-site residue. Asp-100 contacts Zn(2+). Glu-134 acts as the Proton acceptor in catalysis. 3 residues coordinate Zn(2+): Glu-135, Glu-163, and His-349.

The protein belongs to the peptidase M20A family. DapE subfamily. As to quaternary structure, homodimer. It depends on Zn(2+) as a cofactor. Co(2+) serves as cofactor.

It carries out the reaction N-succinyl-(2S,6S)-2,6-diaminopimelate + H2O = (2S,6S)-2,6-diaminopimelate + succinate. Its pathway is amino-acid biosynthesis; L-lysine biosynthesis via DAP pathway; LL-2,6-diaminopimelate from (S)-tetrahydrodipicolinate (succinylase route): step 3/3. Functionally, catalyzes the hydrolysis of N-succinyl-L,L-diaminopimelic acid (SDAP), forming succinate and LL-2,6-diaminopimelate (DAP), an intermediate involved in the bacterial biosynthesis of lysine and meso-diaminopimelic acid, an essential component of bacterial cell walls. This Shewanella loihica (strain ATCC BAA-1088 / PV-4) protein is Succinyl-diaminopimelate desuccinylase 1.